A 792-amino-acid polypeptide reads, in one-letter code: Ubiquitin carboxyl-terminal hydrolase 10 (792 aa).

Residues 2-27 (TTQESIKPLVDRILSNPLQFNAAMIS) form a DHR2-binding module region. 2 disordered regions span residues 64–87 (AESK…NTVP) and 103–320 (KDAA…SITP). The segment covering 107-129 (DATGAKKSAELSTELSTEPPSSS) has biased composition (low complexity). An SIR4-binding module region spans residues 109-145 (TGAKKSAELSTELSTEPPSSSSEDDKVGKEEEEEGEI). The span at 144–171 (EIFHEARDYVEPRKASLKERDNADKGDG) shows a compositional bias: basic and acidic residues. A UTP22-binding module region spans residues 167–208 (DKGDGEDIGEDIGEDIGEDIGEDIGEDIGENLGSPLATIDDS). Positions 172–195 (EDIGEDIGEDIGEDIGEDIGEDIG) are enriched in acidic residues. Residues 211 to 220 (ENEKEKRKEL) show a composition bias toward basic and acidic residues. Over residues 226–241 (SDDEIEDDEDEDDMDY) the composition is skewed to acidic residues. Positions 288-297 (VNNTKENGNR) are enriched in polar residues. In terms of domain architecture, USP spans 362–733 (RGLLNHGVTC…NAYYLLYTRL (372 aa)). The Nucleophile role is filled by cysteine 371. The interval 526–563 (LDPNSDLSSDSINGTSATTSTTTSNAATKPSLSSSSSV) is disordered. A compositionally biased stretch (polar residues) spans 530–539 (SDLSSDSING). Positions 540–563 (TSATTSTTTSNAATKPSLSSSSSV) are enriched in low complexity. Histidine 691 (proton acceptor) is an active-site residue. Over residues 749-766 (TGNVTSKSKQEQAVNEPN) the composition is skewed to polar residues. The tract at residues 749–792 (TGNVTSKSKQEQAVNEPNNRPLKINSKKNNRKKWKKNKKRKFTK) is disordered. Residues 773–792 (NSKKNNRKKWKKNKKRKFTK) are compositionally biased toward basic residues.

The protein belongs to the peptidase C19 family. Interacts with SIR4. Interacts with the proliferating-cell nuclear antigen PCNA/POL30. Interacts with DHR2 and UTP22.

The protein resides in the nucleus. The protein localises to the chromosome. It localises to the telomere. It is found in the nucleolus. The catalysed reaction is Thiol-dependent hydrolysis of ester, thioester, amide, peptide and isopeptide bonds formed by the C-terminal Gly of ubiquitin (a 76-residue protein attached to proteins as an intracellular targeting signal).. Its function is as follows. Deubiquitinating enzyme involved in telomere and HM loci silencing, which is the repression of chromatin structure which leads to a stop in the transcription of nearby genes. Targets histone H2B for deubiquitination, thus helping to localize SIR2 to the telomere. At silent chromatin, including telomeres and the rDNA locus, not only maintains low H2B 'Lys-123' ubiquitination (H2BK123Ub), but also low H3 'Lys-4' and 'Lys-79' methylation (H3K4me and H3K79me, respectively). Controls the proliferating-cell nuclear antigen PCNA/POL30 deubiquitination which is crucial for keeping TLS polymerases in check as well as for down-regulating the error-free bypass. Deubiquitinates and stabilizes RPA190, the largest subunit of RNA polymerase I, to achieve optimal levels of ribosomes and cell growth. Also protects nutrient transporters such as GAP1 from ubiquitin-dependent endocytosis. The chain is Ubiquitin carboxyl-terminal hydrolase 10 (UBP10) from Saccharomyces cerevisiae (strain ATCC 204508 / S288c) (Baker's yeast).